A 631-amino-acid polypeptide reads, in one-letter code: Phosphomethylpyrimidine synthase (631 aa).

Substrate contacts are provided by residues Asn239, Met268, Tyr297, His333, 353–355 (SRG), 394–397 (DGLR), and Glu433. A Zn(2+)-binding site is contributed by His437. A substrate-binding site is contributed by Tyr460. His501 provides a ligand contact to Zn(2+). Cys581, Cys584, and Cys589 together coordinate [4Fe-4S] cluster.

The protein belongs to the ThiC family. In terms of assembly, homodimer. It depends on [4Fe-4S] cluster as a cofactor.

It carries out the reaction 5-amino-1-(5-phospho-beta-D-ribosyl)imidazole + S-adenosyl-L-methionine = 4-amino-2-methyl-5-(phosphooxymethyl)pyrimidine + CO + 5'-deoxyadenosine + formate + L-methionine + 3 H(+). It participates in cofactor biosynthesis; thiamine diphosphate biosynthesis. Functionally, catalyzes the synthesis of the hydroxymethylpyrimidine phosphate (HMP-P) moiety of thiamine from aminoimidazole ribotide (AIR) in a radical S-adenosyl-L-methionine (SAM)-dependent reaction. This Salmonella agona (strain SL483) protein is Phosphomethylpyrimidine synthase.